The sequence spans 433 residues: MKEVDVVGAGLAGAEAAWQLAKRGIKVRLFEMRPKKFTPAHQTPLFAELVCSNSLGGINLDNAAGLLKEELRFLDSLVIKVADRNRIPAGNALAVDRNLFAEEVTLRLSHHPLIEVIREEVVDINPERVTVIASGPLTSKALAENLKKYLESDYLYFFDAVAPIVAGESLDMEKLFFAGRYQQDKDYLNAPMNEEEYLRFYEALITAERHPLKPFEKDIYYEGCLPIEVIASRGKDTLRFGPLKPKGIIDPRTGKEPYAVVQLRRENLAGDYYNLVGFQTNLTWKEQNRVFRLIPGLENAEFIRFGVMHKNTFINSPALLTPYLNLKKYPRLFFAGQITGGEGYVAAIATGAWAGIAASGMFGKMPEPLPETTMLGGLIRYLNTAPVENFQPMGVNFGLVKPLDRKIKNKKERYKLLAERSLKDLKRWLAVNG.

An FAD-binding site is contributed by 8 to 13 (GAGLAG).

This sequence belongs to the MnmG family. TrmFO subfamily. The cofactor is FAD.

The protein resides in the cytoplasm. It catalyses the reaction uridine(54) in tRNA + (6R)-5,10-methylene-5,6,7,8-tetrahydrofolate + NADH + H(+) = 5-methyluridine(54) in tRNA + (6S)-5,6,7,8-tetrahydrofolate + NAD(+). The catalysed reaction is uridine(54) in tRNA + (6R)-5,10-methylene-5,6,7,8-tetrahydrofolate + NADPH + H(+) = 5-methyluridine(54) in tRNA + (6S)-5,6,7,8-tetrahydrofolate + NADP(+). Functionally, catalyzes the folate-dependent formation of 5-methyl-uridine at position 54 (M-5-U54) in all tRNAs. The chain is Methylenetetrahydrofolate--tRNA-(uracil-5-)-methyltransferase TrmFO from Carboxydothermus hydrogenoformans (strain ATCC BAA-161 / DSM 6008 / Z-2901).